Here is a 142-residue protein sequence, read N- to C-terminus: Hemoglobin subunit alpha (142 aa).

A Globin domain is found at 2–142 (VLSSQNKKAI…VAYELSSCYR (141 aa)). Histidine 60 is a binding site for O2. Position 89 (histidine 89) interacts with heme b.

This sequence belongs to the globin family. As to quaternary structure, heterotetramer of two alpha chains and two beta chains. In terms of tissue distribution, red blood cells.

In terms of biological role, involved in oxygen transport from gills to the various peripheral tissues. This chain is Hemoglobin subunit alpha (hba), found in Hemitrygon akajei (Red stingray).